The following is a 503-amino-acid chain: ATP synthase subunit alpha (503 aa).

169 to 176 serves as a coordination point for ATP; the sequence is GDRQTGKT.

This sequence belongs to the ATPase alpha/beta chains family. In terms of assembly, F-type ATPases have 2 components, CF(1) - the catalytic core - and CF(0) - the membrane proton channel. CF(1) has five subunits: alpha(3), beta(3), gamma(1), delta(1), epsilon(1). CF(0) has three main subunits: a(1), b(2) and c(9-12). The alpha and beta chains form an alternating ring which encloses part of the gamma chain. CF(1) is attached to CF(0) by a central stalk formed by the gamma and epsilon chains, while a peripheral stalk is formed by the delta and b chains.

The protein resides in the cell membrane. It carries out the reaction ATP + H2O + 4 H(+)(in) = ADP + phosphate + 5 H(+)(out). In terms of biological role, produces ATP from ADP in the presence of a proton gradient across the membrane. The alpha chain is a regulatory subunit. The protein is ATP synthase subunit alpha of Macrococcus caseolyticus (strain JCSC5402) (Macrococcoides caseolyticum).